A 384-amino-acid chain; its full sequence is Sodium channel protein Nach (384 aa).

Residues 1-319 lie on the Extracellular side of the membrane; it reads AAFAYFSGFM…LVSHLGSAFS (319 aa). 2 N-linked (GlcNAc...) asparagine glycosylation sites follow: Asn-32 and Asn-215. A helical membrane pass occupies residues 320-340; it reads LFVGMSMLSLVEIIYYFTVIL. Over 341 to 384 the chain is Cytoplasmic; that stretch reads RRNYVQECRARQKLQTLHRRPNFGWPGDKNSNQQKSVFYIRGRN.

This sequence belongs to the amiloride-sensitive sodium channel (TC 1.A.6) family.

The protein localises to the membrane. Part of a complex that plays a role in tracheal liquid clearance. Probable role in sodium transport. This chain is Sodium channel protein Nach (Nach), found in Drosophila virilis (Fruit fly).